The following is a 78-amino-acid chain: FXYD domain-containing ion transport regulator 7 (78 aa).

Topologically, residues 1–22 (MATQVPTKVPQDPDPFYYDYDT) are extracellular. O-linked (GlcNAc) threonine glycosylation is found at threonine 3 and threonine 7. Residues 23–43 (VQTVGMTLATILFLLGILIIL) form a helical membrane-spanning segment. Over 44–78 (SKKVKCRKADSRSESPTCKSCKSELPSSAPGGGGV) the chain is Cytoplasmic. Positions 52 to 78 (ADSRSESPTCKSCKSELPSSAPGGGGV) are disordered. Serine 71 carries the phosphoserine modification.

It belongs to the FXYD family. In terms of assembly, regulatory subunit of the sodium/potassium-transporting ATPase which is composed of a catalytic alpha subunit, a non-catalytic beta subunit and an additional regulatory subunit. The regulatory subunit, a member of the FXYD protein family, modulates the enzymatic activity in a tissue- and isoform-specific way by changing affinities of the Na+/K+-ATPase toward Na(+), K(+) or ATP. In terms of processing, O-glycosylated; required for stabilization and translocation to the plasma membrane.

The protein resides in the cell membrane. Functionally, associates with and regulates the activity of the sodium/potassium-transporting ATPase (NKA) which catalyzes the hydrolysis of ATP coupled with the exchange of Na(+) and K(+) ions across the plasma membrane. Reduces the apparent affinity for external K(+), an effect that depends on the presence of external Na(+) and voltage. Increases the apparent affinity for intracellular Na(+). The protein is FXYD domain-containing ion transport regulator 7 (FXYD7) of Bos taurus (Bovine).